A 354-amino-acid polypeptide reads, in one-letter code: Dihydroorotate dehydrogenase (quinone) (354 aa).

FMN-binding positions include 67-71 (AGFDK) and Thr91. Lys71 is a substrate binding site. Position 116–120 (116–120 (NRMGF)) interacts with substrate. FMN is bound by residues Asn144 and Asn177. Asn177 lines the substrate pocket. The active-site Nucleophile is the Ser180. Asn182 serves as a coordination point for substrate. Residues Lys213 and Thr241 each contribute to the FMN site. 242–243 (NT) is a binding site for substrate. Residues Gly265, Gly294, and 315–316 (YT) each bind FMN.

The protein belongs to the dihydroorotate dehydrogenase family. Type 2 subfamily. As to quaternary structure, monomer. FMN is required as a cofactor.

The protein localises to the cell membrane. It carries out the reaction (S)-dihydroorotate + a quinone = orotate + a quinol. Its pathway is pyrimidine metabolism; UMP biosynthesis via de novo pathway; orotate from (S)-dihydroorotate (quinone route): step 1/1. Catalyzes the conversion of dihydroorotate to orotate with quinone as electron acceptor. The protein is Dihydroorotate dehydrogenase (quinone) of Mycolicibacterium smegmatis (strain ATCC 700084 / mc(2)155) (Mycobacterium smegmatis).